A 219-amino-acid chain; its full sequence is Ribose-5-phosphate isomerase A (219 aa).

Residues 28–31 (SGST), 81–84 (DGAD), and 94–97 (KGGG) each bind substrate. Glutamate 103 functions as the Proton acceptor in the catalytic mechanism. Lysine 121 contributes to the substrate binding site.

This sequence belongs to the ribose 5-phosphate isomerase family. Homodimer.

The enzyme catalyses aldehydo-D-ribose 5-phosphate = D-ribulose 5-phosphate. Its pathway is carbohydrate degradation; pentose phosphate pathway; D-ribose 5-phosphate from D-ribulose 5-phosphate (non-oxidative stage): step 1/1. In terms of biological role, catalyzes the reversible conversion of ribose-5-phosphate to ribulose 5-phosphate. This chain is Ribose-5-phosphate isomerase A, found in Actinobacillus succinogenes (strain ATCC 55618 / DSM 22257 / CCUG 43843 / 130Z).